The sequence spans 367 residues: MNSHECGAQACVCCPVLGEAIAAGNEGRGDTAHAPVRGTVVVQPQRDGYGRARPREPIEIDPWFGHDSSTASVVFPQRGRPWVTCDWPLDVTVRSPRATWDARFFCGYAFRPATADGTRSCLLGVPGDAGMSRVVCRPPPNEREIDVRVSPGECLEFSMAIIAPGSEMFWTAVPPRELLDYVCAKAMLLMDCLLSERVSRKAAIVPMLLLQEEAFLPSDRKRARWSDPDTPGRPLVTAEHAYASGARLECPFVIDLARRRNNFWAGMGLAFLPRTALSTRERILAKFCAHHIIIDVMTNLGREVVIPAALSMPGESVVMVVTSDEHGLRIDVRERRPTLNAQRAHAAAQQQPRRRNRRQQGTGASAS.

The interval arginine 333–serine 367 is disordered. The span at alanine 341–glutamine 351 shows a compositional bias: low complexity.

This is an uncharacterized protein from Amazona oratrix (yellow-headed parrot).